The following is a 547-amino-acid chain: Collagen EMF1-alpha (547 aa).

Disordered regions lie at residues 1–99 (GVPG…APGV) and 116–311 (GPDG…GGGI). The triple-helical region stretch occupies residues 1-280 (GVPGPNGDVG…QGPRGGQGPK (280 aa)). Composition is skewed to low complexity over residues 27–69 (QGPD…IRGQ) and 160–175 (QGSK…VGPQ). Lysine 187 is modified (allysine). The segment covering 219–228 (VKGEKGEVGD) has biased composition (basic and acidic residues). The span at 246–271 (DAGPAGPIGDAGIQGPPGQDGPTGAQ) shows a compositional bias: low complexity. The segment covering 272–281 (GPRGGQGPKG) has biased composition (gly residues). The segment at 308 to 336 (GGGIILVPVNDQNPTRSPVSGSVFYRGQA) is telopeptide. A propeptide spans 337-547 (EETDVNLGSV…GFEMGPACFY (211 aa)) (C-terminal propeptide). A Fibrillar collagen NC1 domain is found at 343 to 547 (LGSVADVIEL…GFEMGPACFY (205 aa)). N-linked (GlcNAc...) asparagine glycans are attached at residues asparagine 381 and asparagine 406.

This sequence belongs to the fibrillar collagen family.

It localises to the secreted. The protein resides in the extracellular space. The protein localises to the extracellular matrix. The polypeptide is Collagen EMF1-alpha (COLF1) (Ephydatia muelleri (Mueller's freshwater sponge)).